A 330-amino-acid polypeptide reads, in one-letter code: tRNA U34 carboxymethyltransferase (330 aa).

Carboxy-S-adenosyl-L-methionine-binding positions include Lys91, Trp105, Lys110, Gly130, 152–154 (DPS), 181–182 (IE), Met196, Tyr200, and Arg315.

The protein belongs to the class I-like SAM-binding methyltransferase superfamily. CmoB family. As to quaternary structure, homotetramer.

It catalyses the reaction carboxy-S-adenosyl-L-methionine + 5-hydroxyuridine(34) in tRNA = 5-carboxymethoxyuridine(34) in tRNA + S-adenosyl-L-homocysteine + H(+). In terms of biological role, catalyzes carboxymethyl transfer from carboxy-S-adenosyl-L-methionine (Cx-SAM) to 5-hydroxyuridine (ho5U) to form 5-carboxymethoxyuridine (cmo5U) at position 34 in tRNAs. The polypeptide is tRNA U34 carboxymethyltransferase (Shewanella sp. (strain ANA-3)).